We begin with the raw amino-acid sequence, 479 residues long: Aspartyl/glutamyl-tRNA(Asn/Gln) amidotransferase subunit B (479 aa).

This sequence belongs to the GatB/GatE family. GatB subfamily. In terms of assembly, heterotrimer of A, B and C subunits.

The catalysed reaction is L-glutamyl-tRNA(Gln) + L-glutamine + ATP + H2O = L-glutaminyl-tRNA(Gln) + L-glutamate + ADP + phosphate + H(+). It catalyses the reaction L-aspartyl-tRNA(Asn) + L-glutamine + ATP + H2O = L-asparaginyl-tRNA(Asn) + L-glutamate + ADP + phosphate + 2 H(+). Its function is as follows. Allows the formation of correctly charged Asn-tRNA(Asn) or Gln-tRNA(Gln) through the transamidation of misacylated Asp-tRNA(Asn) or Glu-tRNA(Gln) in organisms which lack either or both of asparaginyl-tRNA or glutaminyl-tRNA synthetases. The reaction takes place in the presence of glutamine and ATP through an activated phospho-Asp-tRNA(Asn) or phospho-Glu-tRNA(Gln). In Mesoplasma florum (strain ATCC 33453 / NBRC 100688 / NCTC 11704 / L1) (Acholeplasma florum), this protein is Aspartyl/glutamyl-tRNA(Asn/Gln) amidotransferase subunit B.